We begin with the raw amino-acid sequence, 353 residues long: GTPase Obg (353 aa).

In terms of domain architecture, Obg spans 1–159 (MKFIDEATIK…FELYLELKVL (159 aa)). Residues 160–332 (ADVGLLGMPN…LTYAIMEHVE (173 aa)) form the OBG-type G domain. GTP contacts are provided by residues 166 to 173 (GMPNAGKS), 191 to 195 (FTTLH), 213 to 216 (DVPG), 284 to 287 (NKVD), and 313 to 315 (SAL). 2 residues coordinate Mg(2+): Ser-173 and Thr-193.

The protein belongs to the TRAFAC class OBG-HflX-like GTPase superfamily. OBG GTPase family. In terms of assembly, monomer. Mg(2+) serves as cofactor.

The protein localises to the cytoplasm. In terms of biological role, an essential GTPase which binds GTP, GDP and possibly (p)ppGpp with moderate affinity, with high nucleotide exchange rates and a fairly low GTP hydrolysis rate. Plays a role in control of the cell cycle, stress response, ribosome biogenesis and in those bacteria that undergo differentiation, in morphogenesis control. This chain is GTPase Obg, found in Methylobacillus flagellatus (strain ATCC 51484 / DSM 6875 / VKM B-1610 / KT).